Consider the following 149-residue polypeptide: Large ribosomal subunit protein uL15 (149 aa).

Residues 8-49 (HDLRPAAGSNKPKTRVGRGEASKGKTAGRGTKGTGARKQVPA) are disordered. A compositionally biased stretch (low complexity) spans 31 to 45 (GKTAGRGTKGTGARK).

Belongs to the universal ribosomal protein uL15 family. Part of the 50S ribosomal subunit.

Functionally, binds to the 23S rRNA. The protein is Large ribosomal subunit protein uL15 of Corynebacterium aurimucosum (strain ATCC 700975 / DSM 44827 / CIP 107346 / CN-1) (Corynebacterium nigricans).